Here is a 282-residue protein sequence, read N- to C-terminus: ATP synthase gamma chain (282 aa).

This sequence belongs to the ATPase gamma chain family. F-type ATPases have 2 components, CF(1) - the catalytic core - and CF(0) - the membrane proton channel. CF(1) has five subunits: alpha(3), beta(3), gamma(1), delta(1), epsilon(1). CF(0) has three main subunits: a, b and c.

It localises to the cell inner membrane. Produces ATP from ADP in the presence of a proton gradient across the membrane. The gamma chain is believed to be important in regulating ATPase activity and the flow of protons through the CF(0) complex. This Fusobacterium nucleatum subsp. nucleatum (strain ATCC 25586 / DSM 15643 / BCRC 10681 / CIP 101130 / JCM 8532 / KCTC 2640 / LMG 13131 / VPI 4355) protein is ATP synthase gamma chain.